Consider the following 61-residue polypeptide: Large ribosomal subunit protein bL28 (61 aa).

The interval 1 to 26 is disordered; sequence MAKDFVTGRKTTFGKKRSHALNQTNR.

This sequence belongs to the bacterial ribosomal protein bL28 family.

This chain is Large ribosomal subunit protein bL28, found in Ligilactobacillus salivarius (strain UCC118) (Lactobacillus salivarius).